The primary structure comprises 642 residues: Kinesin-like protein KIN-7L (642 aa).

A Kinesin motor domain is found at 3–337; the sequence is KISVAVRFRP…LQFASRAKCV (335 aa). The segment covering 12 to 27 has biased composition (low complexity); sequence PPTTAAPAADQSPSST. The disordered stretch occupies residues 12-33; sequence PPTTAAPAADQSPSSTGGDREW. ATP is bound at residue 94-101; the sequence is GQTSSGKT. 2 coiled-coil regions span residues 343-428 and 540-612; these read VNEI…SNTS and RQQL…FSQA.

Belongs to the TRAFAC class myosin-kinesin ATPase superfamily. Kinesin family. KIN-7 subfamily.

In Oryza sativa subsp. japonica (Rice), this protein is Kinesin-like protein KIN-7L.